The primary structure comprises 90 residues: Probable Fe(2+)-trafficking protein (90 aa).

This sequence belongs to the Fe(2+)-trafficking protein family.

Functionally, could be a mediator in iron transactions between iron acquisition and iron-requiring processes, such as synthesis and/or repair of Fe-S clusters in biosynthetic enzymes. This Actinobacillus succinogenes (strain ATCC 55618 / DSM 22257 / CCUG 43843 / 130Z) protein is Probable Fe(2+)-trafficking protein.